A 180-amino-acid polypeptide reads, in one-letter code: Oligoribonuclease (180 aa).

Residues 7-170 (LIWIDLEMTG…DDIRESLAEL (164 aa)) enclose the Exonuclease domain. The active site involves Y128.

The protein belongs to the oligoribonuclease family.

It localises to the cytoplasm. In terms of biological role, 3'-to-5' exoribonuclease specific for small oligoribonucleotides. The polypeptide is Oligoribonuclease (Pectobacterium atrosepticum (strain SCRI 1043 / ATCC BAA-672) (Erwinia carotovora subsp. atroseptica)).